A 363-amino-acid polypeptide reads, in one-letter code: NAD(P)H-quinone oxidoreductase subunit 1, chloroplastic (363 aa).

6 helical membrane-spanning segments follow: residues 30-50 (LVPI…IVWL), 98-118 (FSIG…VIPF), 129-149 (IGIF…LMSG), 248-268 (YSGI…LLSS), 300-320 (IIGT…FLFI), and 343-363 (FLLP…LLSL).

This sequence belongs to the complex I subunit 1 family. NDH is composed of at least 16 different subunits, 5 of which are encoded in the nucleus.

It is found in the plastid. The protein resides in the chloroplast thylakoid membrane. It carries out the reaction a plastoquinone + NADH + (n+1) H(+)(in) = a plastoquinol + NAD(+) + n H(+)(out). It catalyses the reaction a plastoquinone + NADPH + (n+1) H(+)(in) = a plastoquinol + NADP(+) + n H(+)(out). NDH shuttles electrons from NAD(P)H:plastoquinone, via FMN and iron-sulfur (Fe-S) centers, to quinones in the photosynthetic chain and possibly in a chloroplast respiratory chain. The immediate electron acceptor for the enzyme in this species is believed to be plastoquinone. Couples the redox reaction to proton translocation, and thus conserves the redox energy in a proton gradient. This chain is NAD(P)H-quinone oxidoreductase subunit 1, chloroplastic, found in Gossypium hirsutum (Upland cotton).